Here is a 559-residue protein sequence, read N- to C-terminus: Glycerol kinase (559 aa).

An ADP-binding site is contributed by Thr20. ATP is bound by residues Thr20, Ser21, and Ser22. Thr20 lines the sn-glycerol 3-phosphate pocket. Position 24 (Arg24) interacts with ADP. Residues Arg94, Glu95, and Tyr148 each contribute to the sn-glycerol 3-phosphate site. The glycerol site is built by Arg94, Glu95, and Tyr148. Gly252 is a beta-D-fructose 1,6-bisphosphate binding site. Asp265 lines the sn-glycerol 3-phosphate pocket. 2 residues coordinate glycerol: Asp265 and Gln266. Positions 287, 332, 433, and 437 each coordinate ADP. Thr287, Gly332, and Gly433 together coordinate ATP. Glu501 is a binding site for Zn(2+). Residues Ile532–Ala552 form a helical membrane-spanning segment.

The protein belongs to the FGGY kinase family.

The protein localises to the mitochondrion outer membrane. Its subcellular location is the nucleus. The protein resides in the cytoplasm. It localises to the cytosol. It carries out the reaction glycerol + ATP = sn-glycerol 3-phosphate + ADP + H(+). It participates in polyol metabolism; glycerol degradation via glycerol kinase pathway; sn-glycerol 3-phosphate from glycerol: step 1/1. Kinase that plays a key role in glycerol metabolism, catalyzing its phosphorylation to produce sn-glycerol 3-phosphate. Sn-glycerol 3-phosphate is a crucial intermediate in various metabolic pathways, such as the synthesis of glycerolipids and triglycerides, glycogenesis, glycolysis and gluconeogenesis. This chain is Glycerol kinase, found in Rattus norvegicus (Rat).